We begin with the raw amino-acid sequence, 283 residues long: Bis(5'-nucleosyl)-tetraphosphatase, symmetrical (283 aa).

The protein belongs to the Ap4A hydrolase family.

It carries out the reaction P(1),P(4)-bis(5'-adenosyl) tetraphosphate + H2O = 2 ADP + 2 H(+). In terms of biological role, hydrolyzes diadenosine 5',5'''-P1,P4-tetraphosphate to yield ADP. The chain is Bis(5'-nucleosyl)-tetraphosphatase, symmetrical from Pseudomonas paraeruginosa (strain DSM 24068 / PA7) (Pseudomonas aeruginosa (strain PA7)).